The sequence spans 363 residues: Spermidine/putrescine import ATP-binding protein PotA (363 aa).

Positions 9–239 constitute an ABC transporter domain; the sequence is IDVRNAVKRY…PANRFVADFI (231 aa). 41-48 is a binding site for ATP; sequence GPSGCGKT.

It belongs to the ABC transporter superfamily. Spermidine/putrescine importer (TC 3.A.1.11.1) family. The complex is composed of two ATP-binding proteins (PotA), two transmembrane proteins (PotB and PotC) and a solute-binding protein (PotD).

Its subcellular location is the cell inner membrane. The catalysed reaction is ATP + H2O + polyamine-[polyamine-binding protein]Side 1 = ADP + phosphate + polyamineSide 2 + [polyamine-binding protein]Side 1.. Functionally, part of the ABC transporter complex PotABCD involved in spermidine/putrescine import. Responsible for energy coupling to the transport system. This Roseobacter denitrificans (strain ATCC 33942 / OCh 114) (Erythrobacter sp. (strain OCh 114)) protein is Spermidine/putrescine import ATP-binding protein PotA.